The following is a 179-amino-acid chain: Crossover junction endodeoxyribonuclease RuvC (179 aa).

Residues D12, E72, and D144 contribute to the active site. Mg(2+) contacts are provided by D12, E72, and D144.

This sequence belongs to the RuvC family. In terms of assembly, homodimer which binds Holliday junction (HJ) DNA. The HJ becomes 2-fold symmetrical on binding to RuvC with unstacked arms; it has a different conformation from HJ DNA in complex with RuvA. In the full resolvosome a probable DNA-RuvA(4)-RuvB(12)-RuvC(2) complex forms which resolves the HJ. The cofactor is Mg(2+).

The protein resides in the cytoplasm. The enzyme catalyses Endonucleolytic cleavage at a junction such as a reciprocal single-stranded crossover between two homologous DNA duplexes (Holliday junction).. The RuvA-RuvB-RuvC complex processes Holliday junction (HJ) DNA during genetic recombination and DNA repair. Endonuclease that resolves HJ intermediates. Cleaves cruciform DNA by making single-stranded nicks across the HJ at symmetrical positions within the homologous arms, yielding a 5'-phosphate and a 3'-hydroxyl group; requires a central core of homology in the junction. The consensus cleavage sequence is 5'-(A/T)TT(C/G)-3'. Cleavage occurs on the 3'-side of the TT dinucleotide at the point of strand exchange. HJ branch migration catalyzed by RuvA-RuvB allows RuvC to scan DNA until it finds its consensus sequence, where it cleaves and resolves the cruciform DNA. In Dechloromonas aromatica (strain RCB), this protein is Crossover junction endodeoxyribonuclease RuvC.